The primary structure comprises 568 residues: Oxygen-dependent choline dehydrogenase (568 aa).

Residue 8-37 (DYIIIGAGSAGNTLAARLTEDAGVTVLLLE) participates in FAD binding. The active-site Proton acceptor is His-477.

The protein belongs to the GMC oxidoreductase family. FAD is required as a cofactor.

The enzyme catalyses choline + A = betaine aldehyde + AH2. It catalyses the reaction betaine aldehyde + NAD(+) + H2O = glycine betaine + NADH + 2 H(+). The protein operates within amine and polyamine biosynthesis; betaine biosynthesis via choline pathway; betaine aldehyde from choline (cytochrome c reductase route): step 1/1. Involved in the biosynthesis of the osmoprotectant glycine betaine. Catalyzes the oxidation of choline to betaine aldehyde and betaine aldehyde to glycine betaine at the same rate. In Pseudomonas syringae pv. syringae (strain B728a), this protein is Oxygen-dependent choline dehydrogenase.